Reading from the N-terminus, the 216-residue chain is Large ribosomal subunit protein bL25 (216 aa).

Residues 191 to 216 are disordered; sequence LVSAESEEDEDAPAADEVPATEVSEE. Acidic residues predominate over residues 195-204; it reads ESEEDEDAPA.

It belongs to the bacterial ribosomal protein bL25 family. CTC subfamily. In terms of assembly, part of the 50S ribosomal subunit; part of the 5S rRNA/L5/L18/L25 subcomplex. Contacts the 5S rRNA. Binds to the 5S rRNA independently of L5 and L18.

In terms of biological role, this is one of the proteins that binds to the 5S RNA in the ribosome where it forms part of the central protuberance. The polypeptide is Large ribosomal subunit protein bL25 (Jannaschia sp. (strain CCS1)).